A 1051-amino-acid chain; its full sequence is Carbamoyl phosphate synthase large chain (1051 aa).

The interval M1–D399 is carboxyphosphate synthetic domain. Positions 127, 167, 173, 174, 206, 208, 213, 239, 240, 241, 282, and 296 each coordinate ATP. The ATP-grasp 1 domain occupies R131 to L325. Residues Q282, E296, and N298 each contribute to the Mg(2+) site. Residues Q282, E296, and N298 each coordinate Mn(2+). The tract at residues I400–I548 is oligomerization domain. The tract at residues E549–N930 is carbamoyl phosphate synthetic domain. The 191-residue stretch at S673–F863 folds into the ATP-grasp 2 domain. ATP-binding residues include R709, K748, I750, E755, G779, V780, H781, S782, Q822, and E834. Residues Q822, E834, and N836 each coordinate Mg(2+). Residues Q822, E834, and N836 each coordinate Mn(2+). Positions N930–I1051 constitute an MGS-like domain. Residues R931–I1051 are allosteric domain.

The protein belongs to the CarB family. Composed of two chains; the small (or glutamine) chain promotes the hydrolysis of glutamine to ammonia, which is used by the large (or ammonia) chain to synthesize carbamoyl phosphate. Tetramer of heterodimers (alpha,beta)4. Requires Mg(2+) as cofactor. Mn(2+) is required as a cofactor.

It catalyses the reaction hydrogencarbonate + L-glutamine + 2 ATP + H2O = carbamoyl phosphate + L-glutamate + 2 ADP + phosphate + 2 H(+). The enzyme catalyses hydrogencarbonate + NH4(+) + 2 ATP = carbamoyl phosphate + 2 ADP + phosphate + 2 H(+). It functions in the pathway amino-acid biosynthesis; L-arginine biosynthesis; carbamoyl phosphate from bicarbonate: step 1/1. The protein operates within pyrimidine metabolism; UMP biosynthesis via de novo pathway; (S)-dihydroorotate from bicarbonate: step 1/3. Its function is as follows. Large subunit of the glutamine-dependent carbamoyl phosphate synthetase (CPSase). CPSase catalyzes the formation of carbamoyl phosphate from the ammonia moiety of glutamine, carbonate, and phosphate donated by ATP, constituting the first step of 2 biosynthetic pathways, one leading to arginine and/or urea and the other to pyrimidine nucleotides. The large subunit (synthetase) binds the substrates ammonia (free or transferred from glutamine from the small subunit), hydrogencarbonate and ATP and carries out an ATP-coupled ligase reaction, activating hydrogencarbonate by forming carboxy phosphate which reacts with ammonia to form carbamoyl phosphate. This Saccharolobus solfataricus (strain ATCC 35092 / DSM 1617 / JCM 11322 / P2) (Sulfolobus solfataricus) protein is Carbamoyl phosphate synthase large chain.